We begin with the raw amino-acid sequence, 336 residues long: Methionine synthase (336 aa).

Zn(2+) contacts are provided by His-210, Cys-212, Glu-234, and Cys-294.

This sequence belongs to the archaeal MetE family. Zn(2+) serves as cofactor.

It participates in amino-acid biosynthesis; L-methionine biosynthesis via de novo pathway. Its function is as follows. Catalyzes the transfer of a methyl group to L-homocysteine resulting in methionine formation. The physiological methyl donor is unknown. This chain is Methionine synthase, found in Thermococcus kodakarensis (strain ATCC BAA-918 / JCM 12380 / KOD1) (Pyrococcus kodakaraensis (strain KOD1)).